Here is a 522-residue protein sequence, read N- to C-terminus: Kelch domain-containing protein 4 (522 aa).

Residues 1-10 (MGKKGKKEKK) show a composition bias toward basic residues. Residues 1 to 33 (MGKKGKKEKKGRGAEKTAAKMEKKVSKRSRKEE) form a disordered region. Basic and acidic residues predominate over residues 11–24 (GRGAEKTAAKMEKK). Kelch repeat units lie at residues 77-129 (ELIL…VVPQ), 133-187 (QLWV…AWKR), 188-241 (QLIL…VTPQ), 243-289 (GIII…MNPS), and 308-361 (QTLF…RRGR). 3 disordered regions span residues 346–378 (QLKG…GAGT), 402–432 (LAAP…PCPR), and 481–522 (DPET…GAED). 2 positions are modified to phosphoserine: S413 and S418. The stretch at 443–494 (VLYVYGGMFEAGDRQVTLSDLHCLDLHRMEAWKALVEMDPETQEWLEETDSE) is one Kelch 6 repeat.

The sequence is that of Kelch domain-containing protein 4 (KLHDC4) from Pongo abelii (Sumatran orangutan).